We begin with the raw amino-acid sequence, 152 residues long: S-protein homolog 4 (152 aa).

The N-terminal stretch at 1–23 (MTTMLKTQVHVVVIYLLIQIAFS) is a signal peptide. N-linked (GlcNAc...) asparagine glycosylation occurs at asparagine 71.

The protein belongs to the plant self-incompatibility (S1) protein family.

It is found in the secreted. The protein is S-protein homolog 4 of Arabidopsis thaliana (Mouse-ear cress).